Consider the following 344-residue polypeptide: Selenide, water dikinase (344 aa).

Cys-16 is an active-site residue. ATP-binding positions include Lys-19 and 47–49; that span reads SRD. Asp-50 provides a ligand contact to Mg(2+). ATP-binding positions include Asp-67, Asp-90, and 138-140; that span reads GHS. Asp-90 contributes to the Mg(2+) binding site. Asp-226 lines the Mg(2+) pocket.

Belongs to the selenophosphate synthase 1 family. Class I subfamily. In terms of assembly, homodimer. The cofactor is Mg(2+).

It catalyses the reaction hydrogenselenide + ATP + H2O = selenophosphate + AMP + phosphate + 2 H(+). Synthesizes selenophosphate from selenide and ATP. The sequence is that of Selenide, water dikinase from Pseudomonas putida (strain ATCC 47054 / DSM 6125 / CFBP 8728 / NCIMB 11950 / KT2440).